The chain runs to 369 residues: MLESIRLYKDLHDFELQGPTRVVEWIGDKSICVAGYDSAKRNEILQLLIPQKLHAKENPGLCPERDLKVEHGGFIDEPVYSLKHIPQSSLIVTSGPASCPLWVWQIGPEDRDVIQPISTLPSDAGKGTWTRIATTTSASPQILHGSQADSIRLTDIESTKQIHTLGVSGSDGVSTLCFLDSRTVFVCCMNGRQFIADIRMPGAASEGRVGEEGLSCVTWCSAVHPSKEDVCSTVASVSSEGHMCLTDPRNLSVPLKCATWCTPIPAASEQFLSICWAPALSDCISVSGFGGSVQIFDTKRWDSAMKEREAVFIHKGHSVMGTCEDGREPTVTAHAWHPWKERTVLSAASDGSLHVWNWSDLPVHDGTEL.

WD repeat units lie at residues 74-114, 266-306, and 326-366; these read FIDE…RDVI, AASE…SAMK, and GREP…VHDG.

Belongs to the WD repeat WDR73 family.

The protein localises to the cytoplasm. It localises to the cytoskeleton. It is found in the spindle. The protein resides in the spindle pole. Its subcellular location is the cleavage furrow. Functionally, component of a multiprotein complex required for the assembly of the RNA endonuclease module of the integrator complex. Associates with ints9 and ints11 in the cytoplasm, stabilizing the ints9-ints11 heterodimer and blocking the active site of ints11. Brat1 then joins the complex and plugs the active site of ints11, leading to wdr73 release and nuclear import of ints9 and ints11. This Xenopus laevis (African clawed frog) protein is Integrator complex assembly factor WDR73 (wdr73).